A 1184-amino-acid polypeptide reads, in one-letter code: MQKLIERLDFGKIKARGEMPHFLEFQLNSYEDFLQTNMSPNKREEKGFELAFKEIFPIESSNGDVRLEYIGYELHEAEAPLNDELECKKRGKTYSNSLKVRLRLINKKMGNEIQESLVYFGEVPKMTDRATFIINGAERVVVSQLHRSPGVSFSKEVNTQTGKDLFSGKIIPYKGTWLEFETDKNDFLSVKIDRKKKVLATVFLKAVDFFKDNNEIRDYFLEVKELKLKALYKKYSKEPEELLNVLKQELDGSIVKEDILDEETGEFIAEAEAFINEEVINKLIENKVDKISYWYVGPESKLVANTLMNDTTLTEDEAVVEVFKKLRPGDQVTVDSARSLIRQMFFNPQRYDLEPVGRYKMNKRLKLDVPEEQISLTKEDVLGTIKYVIELNNGEQNVHTDDIDNLSNRRIRGVGELLLMQIKTGLAKMNKMVREKMTTQDIETVTPQSLLNTRPLNALIQDFFGSGQLSQFMDQSNPLAELTHKRRISALGPGGLSRERAGFEVRDVHDSHYGRICPIETPEGPNIGLIGSLATYAKINKYGFIETPYVKVENGVALVDDVRYLAADEEDGLFIAQADTKLDKNNKLQGLVVCRYGHEIVEIEPERVNYMDVSPKQVVSVSAGLIPFLEHDDANRALMGSNMQRQAVPLLKSEAPFIGTGLERKVAVDSGAVVTTKVSGKVTYVDGKKIIIEDKDKKEHIYRLLNYERSNQSMCLHQTPLVDLGDKVKAGDIIADGPATKLGDLSLGRNILMGFMPWEGYNYEDAILISDRLRKDDVFTSIHIEEYEIDARTTKLGDEEITREIPNVSESALRNLDENGVIMIGSEVGPGDILVGKTAPKGETEPPAEEKLLRAIFGEKARDVRDTSLTMPHGSKGVVVDILELSRENGDELKAGVNKSIRVLVAEKRKITVGDKMSGRHGNKGVVSRVLPAEDMPFLEDGTHLDVVLNPLGVPSRMNIGQVLEVHLGMAMRTLNGGTCIATPVFDGATEEQVKDYLEKQGYPRTGKVTLYDGRTGEKFDNKVTVGIMYMLKLHHLVEDKMHARAIGPYSLVTQQPLGGKAQFGGQRLGEMEVWALEAYGASNILQEMLTVKSDDITGRTKTYEAIIKGEAMPESDLPESFKVLLKEFQALALDIELCDEEDNVINVDEEIGIEETPTEYSPQYEIEMTGLHEIDEDAEDFEE.

Belongs to the RNA polymerase beta chain family. In terms of assembly, the RNAP catalytic core consists of 2 alpha, 1 beta, 1 beta' and 1 omega subunit. When a sigma factor is associated with the core the holoenzyme is formed, which can initiate transcription.

The catalysed reaction is RNA(n) + a ribonucleoside 5'-triphosphate = RNA(n+1) + diphosphate. Functionally, DNA-dependent RNA polymerase catalyzes the transcription of DNA into RNA using the four ribonucleoside triphosphates as substrates. The sequence is that of DNA-directed RNA polymerase subunit beta from Fusobacterium nucleatum subsp. nucleatum (strain ATCC 25586 / DSM 15643 / BCRC 10681 / CIP 101130 / JCM 8532 / KCTC 2640 / LMG 13131 / VPI 4355).